A 198-amino-acid chain; its full sequence is Probable nicotinate-nucleotide adenylyltransferase (198 aa).

Belongs to the NadD family.

The catalysed reaction is nicotinate beta-D-ribonucleotide + ATP + H(+) = deamido-NAD(+) + diphosphate. It participates in cofactor biosynthesis; NAD(+) biosynthesis; deamido-NAD(+) from nicotinate D-ribonucleotide: step 1/1. Functionally, catalyzes the reversible adenylation of nicotinate mononucleotide (NaMN) to nicotinic acid adenine dinucleotide (NaAD). The polypeptide is Probable nicotinate-nucleotide adenylyltransferase (Chlorobium limicola (strain DSM 245 / NBRC 103803 / 6330)).